Here is a 530-residue protein sequence, read N- to C-terminus: UDP-glucuronosyltransferase 2B14 (530 aa).

A signal peptide spans 1–24; it reads MSVKHVSVLLLLLQLSCCFRTGSC. Asn134 and Asn316 each carry an N-linked (GlcNAc...) asparagine glycan. The chain crosses the membrane as a helical span at residues 494-510; the sequence is VVGFLVSCAAFLIFLVI.

It belongs to the UDP-glycosyltransferase family.

It localises to the microsome membrane. The protein resides in the endoplasmic reticulum membrane. The catalysed reaction is glucuronate acceptor + UDP-alpha-D-glucuronate = acceptor beta-D-glucuronoside + UDP + H(+). Its function is as follows. UDPGT is of major importance in the conjugation and subsequent elimination of potentially toxic xenobiotics and endogenous compounds. This chain is UDP-glucuronosyltransferase 2B14 (UGT2B14), found in Oryctolagus cuniculus (Rabbit).